Reading from the N-terminus, the 384-residue chain is Conidiophore development protein hymA (384 aa).

A compositionally biased stretch (basic and acidic residues) spans 362–374 (EPIEPSRSAREPS). The interval 362-384 (EPIEPSRSAREPSRSTANTTTVA) is disordered.

It belongs to the Mo25 family.

It localises to the cytoplasm. In terms of biological role, required for conidiophore development. The chain is Conidiophore development protein hymA (hymA) from Emericella nidulans (strain FGSC A4 / ATCC 38163 / CBS 112.46 / NRRL 194 / M139) (Aspergillus nidulans).